The sequence spans 112 residues: Mediator of RNA polymerase II transcription subunit 22 (112 aa).

The segment at 83 to 112 is disordered; that stretch reads KPEDGGEGQLADELLDKIEDTSDGVDKETA. Over residues 96–112 the composition is skewed to basic and acidic residues; the sequence is LLDKIEDTSDGVDKETA.

Belongs to the Mediator complex subunit 22 family. As to quaternary structure, component of the Mediator complex.

It localises to the nucleus. Its function is as follows. Component of the Mediator complex, a coactivator involved in the regulated transcription of nearly all RNA polymerase II-dependent genes. Mediator functions as a bridge to convey information from gene-specific regulatory proteins to the basal RNA polymerase II transcription machinery. Mediator is recruited to promoters by direct interactions with regulatory proteins and serves as a scaffold for the assembly of a functional preinitiation complex with RNA polymerase II and the general transcription factors. In Yarrowia lipolytica (strain CLIB 122 / E 150) (Yeast), this protein is Mediator of RNA polymerase II transcription subunit 22 (SRB6).